Consider the following 125-residue polypeptide: Small ribosomal subunit protein uS12 (125 aa).

The residue at position 89 (Asp89) is a 3-methylthioaspartic acid. Residues 106 to 125 (GVKDRKQSRSKYGAKRPKKA) form a disordered region. Residues 113-125 (SRSKYGAKRPKKA) are compositionally biased toward basic residues.

The protein belongs to the universal ribosomal protein uS12 family. In terms of assembly, part of the 30S ribosomal subunit. Contacts proteins S8 and S17. May interact with IF1 in the 30S initiation complex.

Its function is as follows. With S4 and S5 plays an important role in translational accuracy. Interacts with and stabilizes bases of the 16S rRNA that are involved in tRNA selection in the A site and with the mRNA backbone. Located at the interface of the 30S and 50S subunits, it traverses the body of the 30S subunit contacting proteins on the other side and probably holding the rRNA structure together. The combined cluster of proteins S8, S12 and S17 appears to hold together the shoulder and platform of the 30S subunit. The sequence is that of Small ribosomal subunit protein uS12 from Variovorax paradoxus (strain S110).